The following is a 116-amino-acid chain: UPF0342 protein lhv_1666 (116 aa).

It belongs to the UPF0342 family.

This Lactobacillus helveticus (strain DPC 4571) protein is UPF0342 protein lhv_1666.